The sequence spans 20 residues: uncharacterized protein (20 aa).

This is an uncharacterized protein from Escherichia coli (strain K12).